An 89-amino-acid polypeptide reads, in one-letter code: Putative RING finger protein 121R (89 aa).

An RING-type zinc finger spans residues C45 to R78.

This is Putative RING finger protein 121R from Invertebrate iridescent virus 6 (IIV-6).